The following is a 982-amino-acid chain: NACHT, LRR and PYD domains-containing protein 4C (982 aa).

Residues 1–93 (MASFFSDFGL…MERAGREIAG (93 aa)) form the Pyrin domain. Residues 148–471 (HMVFLQGAAG…FYLLKSHMDH (324 aa)) form the NACHT domain. 154-161 (GAAGIGKS) serves as a coordination point for ATP. LRR repeat units follow at residues 594 to 617 (CSTL…HSYT), 689 to 716 (NQCL…VLSQ), 746 to 773 (SKML…LCHP), 802 to 825 (NKTL…VLCG), 827 to 844 (LSLP…YCLI), 859 to 882 (NQNL…LLCD), and 916 to 940 (CKTL…LFEA).

This sequence belongs to the NLRP family.

Its function is as follows. May be involved in inflammation and recognition of cytosolic pathogen-associated molecular patterns (PAMPs) not intercepted by membrane-bound receptors. This is NACHT, LRR and PYD domains-containing protein 4C (Nlrp4c) from Mus musculus (Mouse).